The sequence spans 201 residues: Ras-related protein Rab-9A (201 aa).

The residue at position 2 (Ala-2) is an N-acetylalanine. A GDP-binding site is contributed by Gly-17. GTP contacts are provided by Gly-17, Val-18, Gly-19, Lys-20, Ser-21, Ser-22, Thr-34, His-38, and Thr-39. Positions 19, 20, 21, and 22 each coordinate GDP. Residue Ser-21 coordinates Mg(2+). Residues 31–42 (KFDTQLFHTIGV) carry the Switch 1 motif. The Mg(2+) site is built by Thr-39 and Asp-62. A Switch 2 motif is present at residues 64-78 (AGQERFRSLRTPFYR). GTP-binding residues include Gly-65, Asn-124, Lys-125, Asp-127, Ala-155, and Lys-156. GDP-binding residues include Asn-124, Lys-125, Asp-127, Ala-155, and Lys-156. A Phosphoserine modification is found at Ser-179. Phosphothreonine is present on Thr-187. 2 S-geranylgeranyl cysteine lipidation sites follow: Cys-200 and Cys-201.

Belongs to the small GTPase superfamily. Rab family. In terms of assembly, interacts (preferentially in its GTP-bound form) with GCC2 (via its GRIP domain). Interacts (GTP-bound form) with SGSM1; the GDP-bound form has much lower affinity for SGSM1. Interacts with SGSM2. The GTP-bound form but not the GDP-bound form interacts with HPS4 and BLOC-3 complex (heterodimer of HPS1 and HPS4) but does not interact with HPS1 alone. Interacts (GTP-bound form) with NDE1; two RAB9A-GTP molecules lie on the opposite sides of the NDE1 homodimer; the interaction leads to RAB9A-dynein motor tethering. Interacts (GTP-bound form) with NDEL1. Requires Mg(2+) as cofactor.

The protein localises to the cell membrane. The protein resides in the endoplasmic reticulum membrane. It is found in the golgi apparatus membrane. It localises to the late endosome. Its subcellular location is the cytoplasmic vesicle. The protein localises to the phagosome membrane. The protein resides in the phagosome. It is found in the cytoplasmic vesicle membrane. It localises to the melanosome. It carries out the reaction GTP + H2O = GDP + phosphate + H(+). Regulated by guanine nucleotide exchange factors (GEFs) which promote the exchange of bound GDP for free GTP. Regulated by GTPase activating proteins (GAPs) which increase the GTP hydrolysis activity. Inhibited by GDP dissociation inhibitors (GDIs). In terms of biological role, the small GTPases Rab are key regulators of intracellular membrane trafficking, from the formation of transport vesicles to their fusion with membranes. Rabs cycle between an inactive GDP-bound form and an active GTP-bound form that is able to recruit to membranes different sets of downstream effectors directly responsible for vesicle formation, movement, tethering and fusion. RAB9A is involved in the transport of proteins between the endosomes and the trans-Golgi network (TGN). Specifically uses NDE1/NDEL1 as an effector to interact with the dynein motor complex in order to control retrograde trafficking of RAB9-associated late endosomes to the TGN. Involved in the recruitment of SGSM2 to melanosomes and is required for the proper trafficking of melanogenic enzymes TYR, TYRP1 and DCT/TYRP2 to melanosomes in melanocytes. This chain is Ras-related protein Rab-9A, found in Homo sapiens (Human).